Consider the following 115-residue polypeptide: NAD(P)H-quinone oxidoreductase subunit M (115 aa).

It belongs to the complex I NdhM subunit family. As to quaternary structure, NDH-1 can be composed of about 15 different subunits; different subcomplexes with different compositions have been identified which probably have different functions.

It localises to the cellular thylakoid membrane. The catalysed reaction is a plastoquinone + NADH + (n+1) H(+)(in) = a plastoquinol + NAD(+) + n H(+)(out). The enzyme catalyses a plastoquinone + NADPH + (n+1) H(+)(in) = a plastoquinol + NADP(+) + n H(+)(out). Functionally, NDH-1 shuttles electrons from an unknown electron donor, via FMN and iron-sulfur (Fe-S) centers, to quinones in the respiratory and/or the photosynthetic chain. The immediate electron acceptor for the enzyme in this species is believed to be plastoquinone. Couples the redox reaction to proton translocation, and thus conserves the redox energy in a proton gradient. Cyanobacterial NDH-1 also plays a role in inorganic carbon-concentration. In Prochlorococcus marinus (strain SARG / CCMP1375 / SS120), this protein is NAD(P)H-quinone oxidoreductase subunit M.